The following is a 306-amino-acid chain: tRNA pseudouridine synthase B (306 aa).

The Nucleophile role is filled by D51.

This sequence belongs to the pseudouridine synthase TruB family. Type 1 subfamily.

The enzyme catalyses uridine(55) in tRNA = pseudouridine(55) in tRNA. Functionally, responsible for synthesis of pseudouridine from uracil-55 in the psi GC loop of transfer RNAs. The polypeptide is tRNA pseudouridine synthase B (Nocardia farcinica (strain IFM 10152)).